The following is a 393-amino-acid chain: Metal tolerance protein C2 (393 aa).

The disordered stretch occupies residues 1–23 (MERSISFNPRGDNELPDDRSSDV). Over 1 to 113 (MERSISFNPR…VTSGNRQMKR (113 aa)) the chain is Cytoplasmic. Basic and acidic residues predominate over residues 11–21 (GDNELPDDRSS). The helical transmembrane segment at 114–134 (LFLLIALNVLYSTTELSIGIF) threads the bilayer. At 135-139 (TGRVG) the chain is on the vacuolar side. Residues 140-160 (LVSDAFHLTFGCGLLTFSLFA) traverse the membrane as a helical segment. The Cytoplasmic portion of the chain corresponds to 161–186 (MATSRKKPDHAYSYGYKRLEVLSAFT). The chain crosses the membrane as a helical span at residues 187 to 207 (NALFLMFMSFSLAVEALHAFI). Residues 208–214 (QDESEHK) lie on the Vacuolar side of the membrane. A helical membrane pass occupies residues 215 to 235 (HYLIVSAVTNLLVNLLGVWFF). Topologically, residues 236-259 (RNYARVNIAYRKAEDMNYHSVCLH) are cytoplasmic. A helical membrane pass occupies residues 260 to 280 (VISDSIRSAGLILASWLLSLG). The Vacuolar segment spans residues 281–283 (VEN). A helical membrane pass occupies residues 284–304 (AEVLCLGLVSVTVFMLVMPLF). Topologically, residues 305–393 (KATGGVLLQM…QDLTLQTDYT (89 aa)) are cytoplasmic.

It belongs to the cation diffusion facilitator (CDF) transporter (TC 2.A.4) family.

It localises to the vacuole membrane. Its function is as follows. Involved in sequestration of excess metal in the cytoplasm into vacuoles to maintain metal homeostasis. The polypeptide is Metal tolerance protein C2 (MTPC2) (Arabidopsis thaliana (Mouse-ear cress)).